We begin with the raw amino-acid sequence, 422 residues long: Tyrosine--tRNA ligase (422 aa).

Tyr37 lines the L-tyrosine pocket. Residues 42–51 (PTEESLHIGH) carry the 'HIGH' region motif. L-tyrosine contacts are provided by Tyr175 and Gln179. The 'KMSKS' region signature appears at 235-239 (KFGKT). Lys238 contributes to the ATP binding site. The S4 RNA-binding domain maps to 357-414 (KDLQEALVLTSLAQSRTQAKNMIISNSISINTEKIRKNHIFHEKDKLFGKFTLLSRGK).

Belongs to the class-I aminoacyl-tRNA synthetase family. TyrS type 1 subfamily. In terms of assembly, homodimer.

It is found in the cytoplasm. The enzyme catalyses tRNA(Tyr) + L-tyrosine + ATP = L-tyrosyl-tRNA(Tyr) + AMP + diphosphate + H(+). Catalyzes the attachment of tyrosine to tRNA(Tyr) in a two-step reaction: tyrosine is first activated by ATP to form Tyr-AMP and then transferred to the acceptor end of tRNA(Tyr). This chain is Tyrosine--tRNA ligase, found in Buchnera aphidicola subsp. Acyrthosiphon pisum (strain Tuc7).